The chain runs to 85 residues: Sec-independent protein translocase protein TatA (85 aa).

A helical transmembrane segment spans residues 1–21; that stretch reads MGSFSIWHWLIVLLIIMMVFG. Basic and acidic residues predominate over residues 39–51; that stretch reads FKEGMREGSEDKP. The tract at residues 39–85 is disordered; that stretch reads FKEGMREGSEDKPAGSQQGQQAAGQPPRELHDSTTIDVEARDKSKQG. A compositionally biased stretch (low complexity) spans 52 to 65; it reads AGSQQGQQAAGQPP. The segment covering 66 to 85 has biased composition (basic and acidic residues); sequence RELHDSTTIDVEARDKSKQG.

Belongs to the TatA/E family. The Tat system comprises two distinct complexes: a TatABC complex, containing multiple copies of TatA, TatB and TatC subunits, and a separate TatA complex, containing only TatA subunits. Substrates initially bind to the TatABC complex, which probably triggers association of the separate TatA complex to form the active translocon.

The protein localises to the cell inner membrane. Part of the twin-arginine translocation (Tat) system that transports large folded proteins containing a characteristic twin-arginine motif in their signal peptide across membranes. TatA could form the protein-conducting channel of the Tat system. This chain is Sec-independent protein translocase protein TatA, found in Ralstonia nicotianae (strain ATCC BAA-1114 / GMI1000) (Ralstonia solanacearum).